The primary structure comprises 352 residues: Small ribosomal subunit biogenesis GTPase RsgA (352 aa).

Over residues 1–15 (MTKRKLTQNQKRRIH) the composition is skewed to basic residues. The disordered stretch occupies residues 1–26 (MTKRKLTQNQKRRIHSNNVKALDRHH). The CP-type G domain occupies 106–274 (ENEIARPDYY…LIDSPGIREF (169 aa)). GTP contacts are provided by residues 162-165 (NKVD) and 216-224 (GQSGVGKSS). Cysteine 298, cysteine 303, histidine 305, and cysteine 311 together coordinate Zn(2+).

It belongs to the TRAFAC class YlqF/YawG GTPase family. RsgA subfamily. As to quaternary structure, monomer. Associates with 30S ribosomal subunit, binds 16S rRNA. Requires Zn(2+) as cofactor.

The protein localises to the cytoplasm. One of several proteins that assist in the late maturation steps of the functional core of the 30S ribosomal subunit. Helps release RbfA from mature subunits. May play a role in the assembly of ribosomal proteins into the subunit. Circularly permuted GTPase that catalyzes slow GTP hydrolysis, GTPase activity is stimulated by the 30S ribosomal subunit. This chain is Small ribosomal subunit biogenesis GTPase RsgA, found in Mannheimia succiniciproducens (strain KCTC 0769BP / MBEL55E).